The following is a 940-amino-acid chain: Isoleucine--tRNA ligase (940 aa).

The short motif at 58-68 is the 'HIGH' region element; sequence PYANGSIHIGH. Glu-564 provides a ligand contact to L-isoleucyl-5'-AMP. A 'KMSKS' region motif is present at residues 605-609; sequence KMSKS. Position 608 (Lys-608) interacts with ATP. Zn(2+) is bound by residues Cys-903, Cys-906, Cys-923, and Cys-926.

Belongs to the class-I aminoacyl-tRNA synthetase family. IleS type 1 subfamily. As to quaternary structure, monomer. Zn(2+) is required as a cofactor.

Its subcellular location is the cytoplasm. The enzyme catalyses tRNA(Ile) + L-isoleucine + ATP = L-isoleucyl-tRNA(Ile) + AMP + diphosphate. Its function is as follows. Catalyzes the attachment of isoleucine to tRNA(Ile). As IleRS can inadvertently accommodate and process structurally similar amino acids such as valine, to avoid such errors it has two additional distinct tRNA(Ile)-dependent editing activities. One activity is designated as 'pretransfer' editing and involves the hydrolysis of activated Val-AMP. The other activity is designated 'posttransfer' editing and involves deacylation of mischarged Val-tRNA(Ile). The sequence is that of Isoleucine--tRNA ligase from Shewanella oneidensis (strain ATCC 700550 / JCM 31522 / CIP 106686 / LMG 19005 / NCIMB 14063 / MR-1).